We begin with the raw amino-acid sequence, 162 residues long: Caveolin-2 (162 aa).

Residues 1-86 lie on the Cytoplasmic side of the membrane; sequence MGLETEKADV…FEVSKYVIYK (86 aa). Position 19 is a phosphotyrosine; by SRC (Y19). Phosphoserine is present on residues S20 and S23. Residue Y27 is modified to Phosphotyrosine; by SRC. The segment at residues 87–107 is an intramembrane region (helical); sequence FLTLFLAIPLAFAAGILFATL. At 108-162 the chain is on the cytoplasmic side; that stretch reads SCLHIWIVMPFVKTCLMVLPSVQTIWKSVTDVVIAPLCASVGRSFSSVSMQLSRD.

Belongs to the caveolin family. As to quaternary structure, monomer or homodimer. Interacts with CAV1; the interaction forms a stable heterooligomeric complex that is required for targeting to lipid rafts and for caveolae formation. Tyrosine phosphorylated forms do not form heterooligomers with the Tyr-19-phosphorylated form existing as a monomer or dimer, and the Tyr-27-form as a monomer only. Interacts (tyrosine phosphorylated form) with the SH2 domain-containing proteins, RASA1, NCK1 and SRC. Interacts (tyrosine phosphorylated form) with INSR, the interaction (Tyr-27-phosphorylated form) is increased on insulin stimulation. Interacts (Tyr-19 phosphorylated form) with MAPK1 (phosphorylated form); the interaction, promoted by insulin, leads to nuclear location and MAPK1 activation. Interacts with STAT3; the interaction is increased on insulin-induced tyrosine phosphorylation leading to STAT activation. In terms of processing, phosphorylated on serine and tyrosine residues. CAV1 promotes phosphorylation on Ser-23 which then targets the complex to the plasma membrane, lipid rafts and caveolae. Phosphorylation on both Tyr-19 and Tyr-27 is required for insulin-induced 'Ser-727' phosphorylation of STAT3 and its activation. Phosphorylation on Tyr-19 is required for insulin-induced phosphorylation of MAPK1 and DNA binding of STAT3. Tyrosine phosphorylation is induced by both EGF and insulin.

It localises to the nucleus. The protein resides in the cytoplasm. The protein localises to the golgi apparatus membrane. Its subcellular location is the cell membrane. It is found in the membrane. It localises to the caveola. In terms of biological role, may act as a scaffolding protein within caveolar membranes. Interacts directly with G-protein alpha subunits and can functionally regulate their activity. Acts as an accessory protein in conjunction with CAV1 in targeting to lipid rafts and driving caveolae formation. Positive regulator of cellular mitogenesis of the MAPK signaling pathway. Required for the insulin-stimulated nuclear translocation and activation of MAPK1 and STAT3, and the subsequent regulation of cell cycle progression. The polypeptide is Caveolin-2 (CAV2) (Rhinolophus ferrumequinum (Greater horseshoe bat)).